Reading from the N-terminus, the 67-residue chain is DNA-directed RNA polymerase subunit omega (67 aa).

It belongs to the RNA polymerase subunit omega family. The RNAP catalytic core consists of 2 alpha, 1 beta, 1 beta' and 1 omega subunit. When a sigma factor is associated with the core the holoenzyme is formed, which can initiate transcription.

It carries out the reaction RNA(n) + a ribonucleoside 5'-triphosphate = RNA(n+1) + diphosphate. In terms of biological role, promotes RNA polymerase assembly. Latches the N- and C-terminal regions of the beta' subunit thereby facilitating its interaction with the beta and alpha subunits. The sequence is that of DNA-directed RNA polymerase subunit omega from Moorella thermoacetica (strain ATCC 39073 / JCM 9320).